A 639-amino-acid chain; its full sequence is 1,4-alpha-glucan branching enzyme GlgB (639 aa).

The Nucleophile role is filled by D313. Residue E366 is the Proton donor of the active site.

It belongs to the glycosyl hydrolase 13 family. GlgB subfamily. Monomer.

It catalyses the reaction Transfers a segment of a (1-&gt;4)-alpha-D-glucan chain to a primary hydroxy group in a similar glucan chain.. It participates in glycan biosynthesis; glycogen biosynthesis. Catalyzes the formation of the alpha-1,6-glucosidic linkages in glycogen by scission of a 1,4-alpha-linked oligosaccharide from growing alpha-1,4-glucan chains and the subsequent attachment of the oligosaccharide to the alpha-1,6 position. This Butyrivibrio fibrisolvens protein is 1,4-alpha-glucan branching enzyme GlgB (glgB).